Reading from the N-terminus, the 514-residue chain is Glucose-1-phosphate adenylyltransferase small subunit 2, chloroplastic/amyloplastic/cytosolic (514 aa).

The N-terminal 64 residues, 1–64, are a transit peptide targeting the chloroplast; sequence MAMAAAMGVA…RRRPLVFSPR (64 aa). A disordered region spans residues 35 to 74; it reads RPRRPRGVASSSSSSSSAGRRRRPLVFSPRAVSDSKSSQT. The segment covering 41 to 52 has biased composition (low complexity); the sequence is GVASSSSSSSSA.

It belongs to the bacterial/plant glucose-1-phosphate adenylyltransferase family. As to quaternary structure, heterotetramer composed of two small and two large subunits. As to expression, expressed in leaves.

It is found in the plastid. The protein localises to the chloroplast. The protein resides in the amyloplast. Its subcellular location is the cytoplasm. It localises to the cytosol. The catalysed reaction is alpha-D-glucose 1-phosphate + ATP + H(+) = ADP-alpha-D-glucose + diphosphate. Its pathway is glycan biosynthesis; starch biosynthesis. Activated by 3'phosphoglycerate, inhibited by orthophosphate. Allosteric regulation. Inhibited by inorganic phosphate (Pi). In terms of biological role, involved in synthesis of starch. Catalyzes the synthesis of ADP-glucose, a molecule that serves as an activated glycosyl donor for alpha-1,4-glucan synthesis. The chloroplastic isoform 1 is essential for starch synthesis in leaf chloroplasts and the cytosolic isoform 2 for synthesis in seed endosperm. The polypeptide is Glucose-1-phosphate adenylyltransferase small subunit 2, chloroplastic/amyloplastic/cytosolic (Oryza sativa subsp. japonica (Rice)).